A 428-amino-acid chain; its full sequence is Mitochondrial import inner membrane translocase subunit TIM50-C (428 aa).

Residues 59-79 (LFTCTALPAAAPALFSILHTA) form a helical membrane-spanning segment. Residues 80 to 428 (RGYSSTTKQE…KQWSRNILGR (349 aa)) are Mitochondrial intermembrane-facing. Positions 112 to 138 (FPQTSPEVDSNAEQERKKREEEEEKEN) are disordered. The span at 124–138 (EQERKKREEEEEKEN) shows a compositional bias: basic and acidic residues. The FCP1 homology domain maps to 224–367 (YVQPRYTLVL…LDLIAFLKII (144 aa)).

The protein belongs to the TIM50 family. As to quaternary structure, component of the TIM23 complex at least composed of Tim23, Tim17 (Tim17a1, Tim17a2 or Tim17b1) and a Tim50.

The protein localises to the mitochondrion inner membrane. Essential component of the TIM23 complex, a complex that mediates the translocation of transit peptide-containing proteins across the mitochondrial inner membrane. The polypeptide is Mitochondrial import inner membrane translocase subunit TIM50-C (ttm50) (Drosophila melanogaster (Fruit fly)).